Reading from the N-terminus, the 688-residue chain is Homoaconitase, mitochondrial (688 aa).

[4Fe-4S] cluster-binding residues include Cys-335, Cys-395, and Cys-398. The disordered stretch occupies residues 468-494; that stretch reads SIDLPKSSGNTGATSEEPISEDDTSEA.

It belongs to the aconitase/IPM isomerase family. [4Fe-4S] cluster is required as a cofactor.

It localises to the mitochondrion. It catalyses the reaction (2R,3S)-homoisocitrate = cis-homoaconitate + H2O. Its pathway is amino-acid biosynthesis; L-lysine biosynthesis via AAA pathway; L-alpha-aminoadipate from 2-oxoglutarate: step 3/5. Its function is as follows. Catalyzes the reversible hydration of cis-homoaconitate to (2R,3S)-homoisocitrate, a step in the alpha-aminoadipate pathway for lysine biosynthesis. This chain is Homoaconitase, mitochondrial (LYS4), found in Candida parapsilosis (Yeast).